Consider the following 367-residue polypeptide: 5-amino-6-(D-ribitylamino)uracil--L-tyrosine 4-hydroxyphenyl transferase (367 aa).

In terms of domain architecture, Radical SAM core spans 54–288; the sequence is ITYIENWNIN…VYAISRLMFR (235 aa). [4Fe-4S] cluster-binding residues include Cys-68, Cys-72, and Cys-75.

It belongs to the radical SAM superfamily. CofH family. In terms of assembly, consists of two subunits, CofG and CofH. It depends on [4Fe-4S] cluster as a cofactor.

It catalyses the reaction 5-amino-6-(D-ribitylamino)uracil + L-tyrosine + S-adenosyl-L-methionine = 5-amino-5-(4-hydroxybenzyl)-6-(D-ribitylimino)-5,6-dihydrouracil + 2-iminoacetate + 5'-deoxyadenosine + L-methionine + H(+). It participates in cofactor biosynthesis; coenzyme F0 biosynthesis. Its function is as follows. Catalyzes the radical-mediated synthesis of 5-amino-5-(4-hydroxybenzyl)-6-(D-ribitylimino)-5,6-dihydrouracil from 5-amino-6-(D-ribitylamino)uracil and L-tyrosine. This Methanothermobacter thermautotrophicus (strain ATCC 29096 / DSM 1053 / JCM 10044 / NBRC 100330 / Delta H) (Methanobacterium thermoautotrophicum) protein is 5-amino-6-(D-ribitylamino)uracil--L-tyrosine 4-hydroxyphenyl transferase.